The primary structure comprises 615 residues: MSKYTILDKINTPSDLKLIPESQLKILSAELRAFLVDTLDVSGGHFASSLGATELTVALHYVYNAPYDNIVWDVGHQTYIHKILTGRKDKLVTIKKDGGISGFPKRSESEYDTFGVGHSSTSISAALGMAIADRLQGKSSNTVAVIGDGAITGGMAFEALNHAGGIKEDILVILNDNEMSISDNVGGLSAHFSKIISGGFYNSIREKGKEVLKNIPPIFEFVKKIETQTKGMFVPANFFEDLGFYYVGPIDGHDVTELVKTLRILKDHKGPKLLHVITKKGKGYTKAESDPIKFHHVAPSFHSGENITTKISKPTYSNIFGDWICQKAAKDKRLVGITPAMKEGSDLIRFSQLYPHRYFDVAIAEQHAVTFAGGLACQGLKPVVAIYSTFLQRAYDQVIHDIALQNLDVLYAVDRAGLVGADGATHDGSFDLAFMRCIPNHVIMTPSDENETYHMLEFGYEYNGPAMVRYPRGAGIGAEITGSLDLELGKAKIVKQGSKIAILNFGTLLPLAKQLAEKYHATVIDMRFVKPLDKIMLDKVSQTHEIILTLEENCIAGGAGSAVNEYFVAKDLSNKIIVRNFGLQDKFLNHGTKDLLLAQSKLCVENISKELDKLI.

Thiamine diphosphate-binding positions include His-76 and 117–119 (GHS). Asp-148 is a binding site for Mg(2+). Residues 149-150 (GA), Asn-177, Tyr-284, and Glu-365 each bind thiamine diphosphate. Residue Asn-177 coordinates Mg(2+).

Belongs to the transketolase family. DXPS subfamily. Homodimer. It depends on Mg(2+) as a cofactor. Thiamine diphosphate serves as cofactor.

The enzyme catalyses D-glyceraldehyde 3-phosphate + pyruvate + H(+) = 1-deoxy-D-xylulose 5-phosphate + CO2. Its pathway is metabolic intermediate biosynthesis; 1-deoxy-D-xylulose 5-phosphate biosynthesis; 1-deoxy-D-xylulose 5-phosphate from D-glyceraldehyde 3-phosphate and pyruvate: step 1/1. In terms of biological role, catalyzes the acyloin condensation reaction between C atoms 2 and 3 of pyruvate and glyceraldehyde 3-phosphate to yield 1-deoxy-D-xylulose-5-phosphate (DXP). This is 1-deoxy-D-xylulose-5-phosphate synthase from Francisella tularensis subsp. holarctica (strain FTNF002-00 / FTA).